The sequence spans 187 residues: Signal peptidase complex catalytic subunit SEC11 (187 aa).

Over 1–18 the chain is Cytoplasmic; the sequence is MLSSLSPYMANPRNTLSQ. The chain crosses the membrane as a helical; Signal-anchor for type II membrane protein span at residues 19-39; the sequence is VLNFGLVLSSAFMVWKALSVI. Topologically, residues 40–187 are lumenal; that stretch reads TNSASPVVVV…MGLMVMLQRE (148 aa). Catalysis depends on charge relay system residues serine 53 and histidine 92. Asparagine 125 carries N-linked (GlcNAc...) asparagine glycosylation. Aspartate 129 serves as the catalytic Charge relay system. The interval 173 to 184 is C-terminal short (CTS) helix; sequence VLLGFMGLMVML.

The protein belongs to the peptidase S26B family. Component of the signal peptidase complex (SPC) composed of a catalytic subunit SEC11 and three accessory subunits SPC1, SPC2 and SPC3. The complex induces a local thinning of the ER membrane which is used to measure the length of the signal peptide (SP) h-region of protein substrates. This ensures the selectivity of the complex towards h-regions shorter than 18-20 amino acids. SPC associates with the translocon complex.

The protein resides in the endoplasmic reticulum membrane. It catalyses the reaction Cleavage of hydrophobic, N-terminal signal or leader sequences from secreted and periplasmic proteins.. In terms of biological role, catalytic component of the signal peptidase complex (SPC) which catalyzes the cleavage of N-terminal signal sequences from nascent proteins as they are translocated into the lumen of the endoplasmic reticulum. Specifically cleaves N-terminal signal peptides that contain a hydrophobic alpha-helix (h-region) shorter than 18-20 amino acids. In Ajellomyces capsulatus (strain NAm1 / WU24) (Darling's disease fungus), this protein is Signal peptidase complex catalytic subunit SEC11 (SEC11).